The following is a 124-amino-acid chain: Small ribosomal subunit protein uS13 (124 aa).

The tract at residues 94 to 124 (RGLPVRGQRTKTNARTRKGPKRTIAGKKKAR) is disordered.

It belongs to the universal ribosomal protein uS13 family. In terms of assembly, part of the 30S ribosomal subunit. Forms a loose heterodimer with protein S19. Forms two bridges to the 50S subunit in the 70S ribosome.

Located at the top of the head of the 30S subunit, it contacts several helices of the 16S rRNA. In the 70S ribosome it contacts the 23S rRNA (bridge B1a) and protein L5 of the 50S subunit (bridge B1b), connecting the 2 subunits; these bridges are implicated in subunit movement. Contacts the tRNAs in the A and P-sites. This is Small ribosomal subunit protein uS13 from Mycolicibacterium vanbaalenii (strain DSM 7251 / JCM 13017 / BCRC 16820 / KCTC 9966 / NRRL B-24157 / PYR-1) (Mycobacterium vanbaalenii).